The chain runs to 21 residues: Fibrinogen beta chain (21 aa).

At Gln1 the chain carries Pyrrolidone carboxylic acid. The span at 1 to 11 shows a compositional bias: acidic residues; sequence QFPTDYDEGED. Residues 1–21 are disordered; sequence QFPTDYDEGEDDRPKSGLGAR. O-linked (GalNAc...) threonine glycosylation occurs at Thr4. The residue at position 6 (Tyr6) is a Sulfotyrosine.

Heterohexamer; disulfide linked. Contains 2 sets of 3 non-identical chains (alpha, beta and gamma). The 2 heterotrimers are in head to head conformation with the N-termini in a small central domain. In terms of processing, conversion of fibrinogen to fibrin is triggered by thrombin, which cleaves fibrinopeptides A and B from alpha and beta chains, and thus exposes the N-terminal polymerization sites responsible for the formation of the soft clot.

Its subcellular location is the secreted. In terms of biological role, cleaved by the protease thrombin to yield monomers which, together with fibrinogen alpha (FGA) and fibrinogen gamma (FGG), polymerize to form an insoluble fibrin matrix. Fibrin has a major function in hemostasis as one of the primary components of blood clots. In addition, functions during the early stages of wound repair to stabilize the lesion and guide cell migration during re-epithelialization. Was originally thought to be essential for platelet aggregation, based on in vitro studies using anticoagulated blood. However subsequent studies have shown that it is not absolutely required for thrombus formation in vivo. Enhances expression of SELP in activated platelets. Maternal fibrinogen is essential for successful pregnancy. Fibrin deposition is also associated with infection, where it protects against IFNG-mediated hemorrhage. May also facilitate the antibacterial immune response via both innate and T-cell mediated pathways. The protein is Fibrinogen beta chain (FGB) of Syncerus caffer (African buffalo).